Consider the following 525-residue polypeptide: Putative EGF-like domain-containing protein R659 (525 aa).

The signal sequence occupies residues 1–24 (MGNKWCGIFLTILLLAQMSQTIFG). Residues Asn-60, Asn-77, Asn-171, Asn-181, Asn-268, and Asn-281 are each glycosylated (N-linked (GlcNAc...) asparagine; by host). One can recognise an EGF-like domain in the interval 317 to 359 (LTQGCGNCDSNAECVFVSGSNSIVPKYQCKCKSGYVGNGTHCS). Intrachain disulfides connect Cys-321-Cys-330, Cys-324-Cys-345, and Cys-347-Cys-358. 2 N-linked (GlcNAc...) asparagine; by host glycosylation sites follow: Asn-354 and Asn-411.

It localises to the secreted. The protein is Putative EGF-like domain-containing protein R659 of Acanthamoeba polyphaga (Amoeba).